Consider the following 294-residue polypeptide: DNA replication complex GINS protein SLD5 (294 aa).

It belongs to the GINS4/SLD5 family. In terms of assembly, component of the GINS complex which is a heterotetramer composed of SLD5, PSF1, PSF2 and PSF3. Interacts with PSF2.

It is found in the nucleus. Required for DNA replication. Functions as part of the GINS complex which plays an essential role in the initiation of DNA replication by binding to DNA replication origins and facilitating the assembly of the DNA replication machinery. The sequence is that of DNA replication complex GINS protein SLD5 from Saccharomyces cerevisiae (strain ATCC 204508 / S288c) (Baker's yeast).